Reading from the N-terminus, the 563-residue chain is Methylcrotonoyl-CoA carboxylase beta chain, mitochondrial (563 aa).

A mitochondrion-targeting transit peptide spans 1-22 (MWGALRSALRPCCRAAVPPQRA). One can recognise a CoA carboxyltransferase N-terminal domain in the interval 49–306 (MKALVSQLHE…QKKMDVTIEP (258 aa)). A carboxyltransferase region spans residues 49 to 555 (MKALVSQLHE…SAALNAPIQR (507 aa)). Lysine 70 is modified (N6-acetyllysine; alternate). Lysine 70 is modified (N6-succinyllysine; alternate). At lysine 141 the chain carries N6-succinyllysine. Residues 309-555 (EPLFPADELY…SAALNAPIQR (247 aa)) enclose the CoA carboxyltransferase C-terminal domain. The segment at 343–372 (RFNEFKALYGDTLVTGFARIFGYPVGIIGN) is acyl-CoA binding. An N6-succinyllysine modification is found at lysine 433. An N6-acetyllysine; alternate modification is found at lysine 495. Lysine 495 is modified (N6-succinyllysine; alternate). Lysine 511 is modified (N6-acetyllysine).

It belongs to the AccD/PCCB family. As to quaternary structure, probably a dodecamer composed of six biotin-containing alpha subunits (MCCC1) and six beta (MCCC2) subunits.

The protein localises to the mitochondrion matrix. The enzyme catalyses 3-methylbut-2-enoyl-CoA + hydrogencarbonate + ATP = 3-methyl-(2E)-glutaconyl-CoA + ADP + phosphate + H(+). Its pathway is amino-acid degradation; L-leucine degradation; (S)-3-hydroxy-3-methylglutaryl-CoA from 3-isovaleryl-CoA: step 2/3. Functionally, carboxyltransferase subunit of the 3-methylcrotonyl-CoA carboxylase, an enzyme that catalyzes the conversion of 3-methylcrotonyl-CoA to 3-methylglutaconyl-CoA, a critical step for leucine and isovaleric acid catabolism. In Mus musculus (Mouse), this protein is Methylcrotonoyl-CoA carboxylase beta chain, mitochondrial (Mccc2).